We begin with the raw amino-acid sequence, 495 residues long: MRINPTTSGPAVSTLEEKNVGRIAQIIGPVLDVVFPPGKMPNIYNALVVKGRDTVGQQINVTCEVQQLLGNNRVRAVAMSATDGLTRGMEVIDTRAPLSVPVGGATLGRIFNVLGEPVDNLGPVDTRTTSPIHRSAPAFIQLDTELSIFETGIKVVDLLAPYRRGGKIGLFGGAGVGKTVLIMELIYNIAKAHGGVSVFGGVGVRTREGNDLYMEMKESGVINEKNIAESKVALVYGQMNEPPGARMRVGLTALTMAEYFRDVNEQDVLLFIDNIFRFVQAGSEVSALLGRMPSAVGYQPTLSTEMGSLQERITSTKEGSITSIQAVYVPADDLTDPAPATTFAHLDATTVLSRGLAAKGIYPAVDPLGSTSTMLQPRIVGEEHYETAQRVKQTLQRYKELQDIIAILGLDELSEEDRLTVARARKIERFLSQPFFVAEVFTGSPGKYVGLAETIRGFQLILSGELDGLPEQAFYLVGNIDEATAKAMNLEGEKK.

An ATP-binding site is contributed by 172–179 (GGAGVGKT).

It belongs to the ATPase alpha/beta chains family. F-type ATPases have 2 components, CF(1) - the catalytic core - and CF(0) - the membrane proton channel. CF(1) has five subunits: alpha(3), beta(3), gamma(1), delta(1), epsilon(1). CF(0) has four main subunits: a(1), b(1), b'(1) and c(9-12).

The protein localises to the plastid. It localises to the chloroplast thylakoid membrane. It catalyses the reaction ATP + H2O + 4 H(+)(in) = ADP + phosphate + 5 H(+)(out). Produces ATP from ADP in the presence of a proton gradient across the membrane. The catalytic sites are hosted primarily by the beta subunits. The protein is ATP synthase subunit beta, chloroplastic of Pseudogaltonia clavata (Cape hyacinth).